The sequence spans 180 residues: Shikimate kinase (180 aa).

ATP is bound at residue 14-19 (GAGKSC). Serine 18 contributes to the Mg(2+) binding site. Substrate is bound by residues aspartate 36, arginine 60, and glycine 82. Position 120 (arginine 120) interacts with ATP. Arginine 139 provides a ligand contact to substrate.

This sequence belongs to the shikimate kinase family. Monomer. Mg(2+) is required as a cofactor.

It is found in the cytoplasm. It carries out the reaction shikimate + ATP = 3-phosphoshikimate + ADP + H(+). It functions in the pathway metabolic intermediate biosynthesis; chorismate biosynthesis; chorismate from D-erythrose 4-phosphate and phosphoenolpyruvate: step 5/7. Catalyzes the specific phosphorylation of the 3-hydroxyl group of shikimic acid using ATP as a cosubstrate. The sequence is that of Shikimate kinase from Xanthomonas axonopodis pv. citri (strain 306).